A 350-amino-acid polypeptide reads, in one-letter code: tRNA uridine(34) hydroxylase (350 aa).

Residues 146-240 form the Rhodanese domain; it reads DDPDTLFVDM…YARKAKEQGL (95 aa). Cysteine 200 serves as the catalytic Cysteine persulfide intermediate.

Belongs to the TrhO family.

It carries out the reaction uridine(34) in tRNA + AH2 + O2 = 5-hydroxyuridine(34) in tRNA + A + H2O. In terms of biological role, catalyzes oxygen-dependent 5-hydroxyuridine (ho5U) modification at position 34 in tRNAs. This Yersinia enterocolitica serotype O:8 / biotype 1B (strain NCTC 13174 / 8081) protein is tRNA uridine(34) hydroxylase.